A 687-amino-acid polypeptide reads, in one-letter code: Translation initiation factor IF-2 (687 aa).

Residues 186–355 form the tr-type G domain; it reads KRPPIVTVMG…LLTAEMLELK (170 aa). The segment at 195–202 is G1; sequence GHVDHGKT. 195 to 202 is a GTP binding site; sequence GHVDHGKT. The G2 stretch occupies residues 220–224; that stretch reads GITQH. Positions 241–244 are G3; that stretch reads DTPG. Residues 241–245 and 295–298 contribute to the GTP site; these read DTPGH and NKID. Residues 295–298 form a G4 region; the sequence is NKID. Positions 331-333 are G5; that stretch reads SAK.

Belongs to the TRAFAC class translation factor GTPase superfamily. Classic translation factor GTPase family. IF-2 subfamily.

Its subcellular location is the cytoplasm. Functionally, one of the essential components for the initiation of protein synthesis. Protects formylmethionyl-tRNA from spontaneous hydrolysis and promotes its binding to the 30S ribosomal subunits. Also involved in the hydrolysis of GTP during the formation of the 70S ribosomal complex. In Clostridium botulinum (strain Eklund 17B / Type B), this protein is Translation initiation factor IF-2.